A 293-amino-acid chain; its full sequence is Small ribosomal subunit biogenesis GTPase RsgA (293 aa).

In terms of domain architecture, CP-type G spans 63 to 223 (KNELVRPPIA…VADTPGFSSL (161 aa)). GTP-binding positions include 112-115 (SKMD) and 166-174 (GQSGVGKSS). Zn(2+) contacts are provided by Cys-247, Cys-252, His-254, and Cys-260.

Belongs to the TRAFAC class YlqF/YawG GTPase family. RsgA subfamily. Monomer. Associates with 30S ribosomal subunit, binds 16S rRNA. Zn(2+) is required as a cofactor.

The protein resides in the cytoplasm. One of several proteins that assist in the late maturation steps of the functional core of the 30S ribosomal subunit. Helps release RbfA from mature subunits. May play a role in the assembly of ribosomal proteins into the subunit. Circularly permuted GTPase that catalyzes slow GTP hydrolysis, GTPase activity is stimulated by the 30S ribosomal subunit. The chain is Small ribosomal subunit biogenesis GTPase RsgA from Bacillus cytotoxicus (strain DSM 22905 / CIP 110041 / 391-98 / NVH 391-98).